A 437-amino-acid polypeptide reads, in one-letter code: UDP-N-acetylmuramate--L-alanine ligase (437 aa).

ATP is bound at residue 108 to 114 (GAHGKTS).

The protein belongs to the MurCDEF family.

It is found in the cytoplasm. The enzyme catalyses UDP-N-acetyl-alpha-D-muramate + L-alanine + ATP = UDP-N-acetyl-alpha-D-muramoyl-L-alanine + ADP + phosphate + H(+). It participates in cell wall biogenesis; peptidoglycan biosynthesis. Its function is as follows. Cell wall formation. The polypeptide is UDP-N-acetylmuramate--L-alanine ligase (Staphylococcus aureus (strain MRSA252)).